The primary structure comprises 73 residues: Translation initiation factor IF-1 (73 aa).

The region spanning 1–73 (MAKKDGVIEI…TRGRIVYRYK (73 aa)) is the S1-like domain.

This sequence belongs to the IF-1 family. Component of the 30S ribosomal translation pre-initiation complex which assembles on the 30S ribosome in the order IF-2 and IF-3, IF-1 and N-formylmethionyl-tRNA(fMet); mRNA recruitment can occur at any time during PIC assembly.

The protein localises to the cytoplasm. Functionally, one of the essential components for the initiation of protein synthesis. Stabilizes the binding of IF-2 and IF-3 on the 30S subunit to which N-formylmethionyl-tRNA(fMet) subsequently binds. Helps modulate mRNA selection, yielding the 30S pre-initiation complex (PIC). Upon addition of the 50S ribosomal subunit IF-1, IF-2 and IF-3 are released leaving the mature 70S translation initiation complex. The chain is Translation initiation factor IF-1 from Clavibacter michiganensis subsp. michiganensis (strain NCPPB 382).